A 93-amino-acid chain; its full sequence is Putative regulatory protein Clos_1422 (93 aa).

The protein belongs to the RemA family.

This Alkaliphilus oremlandii (strain OhILAs) (Clostridium oremlandii (strain OhILAs)) protein is Putative regulatory protein Clos_1422.